The sequence spans 446 residues: ATP synthase subunit b-delta (446 aa).

Positions 1 to 168 (MSTFIGQLVG…PAAADVQYPL (168 aa)) are ATP synthase subunit b. Residues 4 to 24 (FIGQLVGFAAIVFLVVRYVVP) form a helical membrane-spanning segment. Residues 169–446 (MTKMRSSSRV…LAAAEAQLPD (278 aa)) form an ATP synthase subunit delta region.

It in the N-terminal section; belongs to the ATPase B chain family. In the C-terminal section; belongs to the ATPase delta chain family. In terms of assembly, F-type ATPases have 2 components, F(1) - the catalytic core - and F(0) - the membrane proton channel. F(1) has five subunits: alpha(3), beta(3), gamma(1), delta(1), epsilon(1). F(0) has three main subunits: a(1), b(2) and c(10-14). The alpha and beta chains form an alternating ring which encloses part of the gamma chain. F(1) is attached to F(0) by a central stalk formed by the gamma and epsilon chains, while a peripheral stalk is formed by the delta and b chains.

The protein resides in the cell membrane. Functionally, f(1)F(0) ATP synthase produces ATP from ADP in the presence of a proton or sodium gradient. F-type ATPases consist of two structural domains, F(1) containing the extramembraneous catalytic core and F(0) containing the membrane proton channel, linked together by a central stalk and a peripheral stalk. During catalysis, ATP synthesis in the catalytic domain of F(1) is coupled via a rotary mechanism of the central stalk subunits to proton translocation. In terms of biological role, this fusion protein includes a component of the F(0) channel (subunit b) and of the F(1) subunit (subunit delta). Two copies of subunit b and one of delta together form the peripheral 'stator' stalk which links F(1) to F(0). This Mycobacterium avium (strain 104) protein is ATP synthase subunit b-delta (atpFH).